An 868-amino-acid chain; its full sequence is Lysosomal cholesterol signaling protein (868 aa).

At 1-36 (MDSYFSAKNSTLAGDMNATWPASHGFNATGDPPSMS) the chain is on the lumenal side. Positions 1–368 (MDSYFSAKNS…SAWLLTFPTM (368 aa)) are PIN-like transporter. N-linked (GlcNAc...) asparagine glycosylation is found at Asn9, Asn17, and Asn27. A helical membrane pass occupies residues 37–57 (ITRLFPALLECFGIVLCGYIA). The cholesterol site is built by Phe41 and Tyr55. The Cytoplasmic segment spans residues 58–77 (GRANIITSTQAKGLGNFVSR). The chain crosses the membrane as a helical span at residues 78–98 (FALPALLFKNMVVLNFSNVDW). Over 99–102 (AFLY) the chain is Lumenal. The helical transmembrane segment at 103 to 123 (SVLIGKASVFFIVCVLTLLVA) threads the bilayer. Topologically, residues 124–131 (SPESRFSK) are cytoplasmic. Residues 132–152 (AGLFPIFATQSNDFALGYPIV) traverse the membrane as a discontinuously helical segment. The Lumenal portion of the chain corresponds to 153 to 165 (EALYQSTYPEYLQ). A helical membrane pass occupies residues 166–186 (YIYLVAPISLMMLNPIGFIFC). The Cytoplasmic portion of the chain corresponds to 187–211 (EIQKSKDTQNASQNKAKIVGLGFLR). The discontinuously helical transmembrane segment at 212 to 232 (VLQNPIVFMVFVGIAFNFILD) threads the bilayer. At 233-241 (KKIPVYMEN) the chain is on the lumenal side. The discontinuously helical transmembrane segment at 242–262 (FLDGLANSFSGSALFYLGLTM) threads the bilayer. Residues 263-271 (VGKIRRLKK) lie on the Cytoplasmic side of the membrane. Gly264, Lys265, and Ile266 together coordinate cholesterol. The chain crosses the membrane as a helical span at residues 272–292 (SAFVVLTLLITAKLLVLPLLC). Residues 293 to 313 (REMVELLDKGDSVVNHTSLSN) are Lumenal-facing. N-linked (GlcNAc...) asparagine glycosylation occurs at Asn307. The chain crosses the membrane as a discontinuously helical span at residues 314–334 (YAFLYGVFPVAPGVAIFATQF). Residues 335–344 (NMEVEIITSG) lie on the Cytoplasmic side of the membrane. Residues 345 to 365 (MVISTFVSAPIMYVSAWLLTF) form a helical membrane-spanning segment. Residues 366–379 (PTMDAKPLAYAIQN) lie on the Lumenal side of the membrane. The tract at residues 378 to 715 (QNVSFDISII…FGIFGLDKHL (338 aa)) is GPCR. A glycan (N-linked (GlcNAc...) asparagine) is linked at Asn379. The helical transmembrane segment at 380–400 (VSFDISIISLVSLIWSLSILL) threads the bilayer. The Cytoplasmic portion of the chain corresponds to 401 to 412 (LSKKYKQLPHML). Residues 413-433 (TANLLIAQTIVCAGMMIWNFV) traverse the membrane as a helical segment. At 434–436 (KEK) the chain is on the lumenal side. Residues 437–457 (NFVGQILVFVLLYSSLYSTYL) traverse the membrane as a helical segment. The Cytoplasmic segment spans residues 458-478 (WTGLLAVSLFLLKKRESVQLP). The helical transmembrane segment at 479–499 (VGIIIISGWGIPALLVGVLLI) threads the bilayer. Topologically, residues 500–518 (TGKHNGDSIDSAFFYGKEQ) are lumenal. Residues 519–539 (MITTAVTLFCSILIAGVSLMC) traverse the membrane as a helical segment. Residues 540-658 (MNRTTQAGHY…GDPQLTRHVL (119 aa)) are Cytoplasmic-facing. The segment at 550–582 (EGFGQSQNHKPVEPGSTAFEENPAPTNEPELFP) is disordered. A cholesterol-binding site is contributed by Arg655. The chain crosses the membrane as a helical span at residues 659–679 (LCLLLIIGLFANLSSCLWWLF). Residues 680–689 (NHETGRLYVE) are Lumenal-facing. Residues 690–710 (LQFFCAVFNFGQGFISFGIFG) form a helical membrane-spanning segment. Residues 711 to 868 (LDKHLIILPF…SSPPSVSPKT (158 aa)) lie on the Cytoplasmic side of the membrane. A DEP domain is found at 755 to 833 (YHRDLCIRNI…DEYLFYRFLQ (79 aa)). Residues 836-868 (PEQSPPARTLRDHQEESYKEIGHSSPPSVSPKT) form a disordered region. Residues 844-857 (TLRDHQEESYKEIG) show a composition bias toward basic and acidic residues.

In terms of assembly, homodimer; via the transporter region and DEP domain. Interacts with the GATOR1 complex; preventing interaction between GATOR1 and KICSTOR; interaction is disrupted upon cholesterol starvation. In terms of tissue distribution, widely expressed in adult tissues and during development. In brain, widely distributed in forebrain regions, while it shows a more restricted distribution in the midbrain and hindbrain regions. Expressed at highest level in the lateral part of striatum and hippocampus.

It localises to the lysosome membrane. Its function is as follows. Cholesterol-binding protein that acts as a regulator of mTORC1 signaling pathway. Acts as a sensor of cholesterol to signal cholesterol sufficiency to mTORC1: in presence of cholesterol, binds cholesterol, leading to disruption of the interaction between the GATOR1 and KICSTOR complexes and promotion of mTORC1 signaling. Upon cholesterol starvation, GPR155/LYCHOS is unable to perturb the association between GATOR1 and KICSTOR, leading to mTORC1 signaling inhibition. Binds indole-3-acetic acid and may play a role in tryptophan metabolism. The sequence is that of Lysosomal cholesterol signaling protein from Mus musculus (Mouse).